The primary structure comprises 228 residues: LOB domain-containing protein 30 (228 aa).

An LOB domain is found at 16 to 118 (GPCGACKFLR…TELSYLQAHL (103 aa)). The tract at residues 188–228 (SNMGGGGELQALAREFIHGGQMPAQPSPGTSGSASSVIKRE) is disordered. Polar residues predominate over residues 214–228 (SPGTSGSASSVIKRE).

The protein belongs to the LOB domain-containing protein family. Expressed in roots, stems, leaves and flowers. Expressed in vascular tissues of hypocotyls, leaves, roots, developing floral organs and siliques.

Its function is as follows. Involved in the positive regulation of tracheary element (TE) differentiation. Involved in a positive feedback loop that maintains or promotes NAC030/VND7 expression that regulates TE differentiation-related genes. The polypeptide is LOB domain-containing protein 30 (LBD30) (Arabidopsis thaliana (Mouse-ear cress)).